A 60-amino-acid polypeptide reads, in one-letter code: Large ribosomal subunit protein bL32 (60 aa).

Belongs to the bacterial ribosomal protein bL32 family.

This Clostridium perfringens (strain ATCC 13124 / DSM 756 / JCM 1290 / NCIMB 6125 / NCTC 8237 / Type A) protein is Large ribosomal subunit protein bL32.